Consider the following 130-residue polypeptide: Large ribosomal subunit protein bL12 (130 aa).

It belongs to the bacterial ribosomal protein bL12 family. As to quaternary structure, homodimer. Part of the ribosomal stalk of the 50S ribosomal subunit. Forms a multimeric L10(L12)X complex, where L10 forms an elongated spine to which 2 to 4 L12 dimers bind in a sequential fashion. Binds GTP-bound translation factors.

Its function is as follows. Forms part of the ribosomal stalk which helps the ribosome interact with GTP-bound translation factors. Is thus essential for accurate translation. The chain is Large ribosomal subunit protein bL12 from Mycolicibacterium vanbaalenii (strain DSM 7251 / JCM 13017 / BCRC 16820 / KCTC 9966 / NRRL B-24157 / PYR-1) (Mycobacterium vanbaalenii).